Here is a 403-residue protein sequence, read N- to C-terminus: RNA-binding motif, single-stranded-interacting protein 1 (403 aa).

The disordered stretch occupies residues 30–56; that stretch reads PAHPMAPPSPSTTSSNNNSSSSSNSGW. Over residues 40-54 the composition is skewed to low complexity; the sequence is STTSSNNNSSSSSNS. 2 consecutive RRM domains span residues 62 to 135 and 141 to 226; these read TNLY…MAKQ and TNLY…FADG. At T208 the chain carries Phosphothreonine. Residues 382–395 are compositionally biased toward polar residues; the sequence is GQQQVAVETSNDHS. The segment at 382–403 is disordered; it reads GQQQVAVETSNDHSPYTFPPNK.

In terms of tissue distribution, ubiquitous. Expressed in all tissues except testis.

It localises to the nucleus. Single-stranded DNA binding protein that interacts with the region upstream of the MYC gene. Binds specifically to the DNA sequence motif 5'-[AT]CT[AT][AT]T-3'. Probably has a role in DNA replication. This chain is RNA-binding motif, single-stranded-interacting protein 1 (Rbms1), found in Mus musculus (Mouse).